We begin with the raw amino-acid sequence, 142 residues long: UPF0179 protein PYRAB06360 (142 aa).

The protein belongs to the UPF0179 family.

The chain is UPF0179 protein PYRAB06360 from Pyrococcus abyssi (strain GE5 / Orsay).